Here is a 502-residue protein sequence, read N- to C-terminus: L-amino-acid oxidase BmooLAAO-I (502 aa).

An N-terminal signal peptide occupies residues 1 to 18 (MNVFFTFSLLFLAALGSC). Cys-28 and Cys-191 are disulfide-bonded. Residues 61 to 62 (MS), 81 to 82 (EA), Arg-89, and 105 to 108 (GPMR) contribute to the FAD site. Substrate is bound at residue Arg-108. Asn-190 carries an N-linked (GlcNAc...) asparagine glycan. His-241 contributes to the substrate binding site. Position 279 (Val-279) interacts with FAD. A disulfide bridge links Cys-349 with Cys-430. Residue Tyr-390 coordinates substrate. FAD-binding positions include Glu-475 and 482–487 (GWIDST). 482–483 (GW) serves as a coordination point for substrate.

It belongs to the flavin monoamine oxidase family. FIG1 subfamily. As to quaternary structure, homodimer; non-covalently linked. It depends on FAD as a cofactor. Post-translationally, N-glycosylated. The enzymatic activity is not affected by deglycosylation. In terms of tissue distribution, expressed by the venom gland.

It is found in the secreted. The enzyme catalyses an L-alpha-amino acid + O2 + H2O = a 2-oxocarboxylate + H2O2 + NH4(+). It carries out the reaction L-leucine + O2 + H2O = 4-methyl-2-oxopentanoate + H2O2 + NH4(+). The catalysed reaction is L-phenylalanine + O2 + H2O = 3-phenylpyruvate + H2O2 + NH4(+). It catalyses the reaction L-tryptophan + O2 + H2O = indole-3-pyruvate + H2O2 + NH4(+). The enzyme catalyses L-methionine + O2 + H2O = 4-methylsulfanyl-2-oxobutanoate + H2O2 + NH4(+). It carries out the reaction L-isoleucine + O2 + H2O = (S)-3-methyl-2-oxopentanoate + H2O2 + NH4(+). The catalysed reaction is L-histidine + O2 + H2O = 3-(imidazol-5-yl)pyruvate + H2O2 + NH4(+). It catalyses the reaction L-tyrosine + O2 + H2O = 3-(4-hydroxyphenyl)pyruvate + H2O2 + NH4(+). The enzyme catalyses L-alanine + O2 + H2O = pyruvate + H2O2 + NH4(+). It carries out the reaction L-valine + O2 + H2O = 3-methyl-2-oxobutanoate + H2O2 + NH4(+). With respect to regulation, its enzymatic activities is reduced when it is exposed to Ca(2+), Zn(2+), Al(3+), Cu(2+) or Ni(2+) salts. In terms of biological role, catalyzes an oxidative deamination of predominantly hydrophobic and aromatic L-amino acids, thus producing hydrogen peroxide that may contribute to the toxicity of the venom. Shows very high activity on L-Met, and L-Leu, high activity on L-Ile, L-Phe and L-Tyr and moderate activity on L-His, L-Val and L-Ala. Exhibits diverse biological activities, such as edema, apoptosis of tumor cell lines, antibacterial activities against both Gram-positive and Gram-negative bacteria, as well as induction of platelet aggregation. Effects of snake L-amino oxidases on platelets are controversial, since they either induce aggregation or inhibit agonist-induced aggregation. These different effects are probably due to different experimental conditions. Unlike other snake venom L-amino acid oxidases, does not induce hemorrhage. It may also induce hemolysis. Has parasiticidal activities against and leishmania, as a result of enzyme-catalyzed hydrogen peroxide production. In Bothrops moojeni (Lance-headed viper), this protein is L-amino-acid oxidase BmooLAAO-I.